A 72-amino-acid polypeptide reads, in one-letter code: Mitotic-spindle organizing protein 1 (72 aa).

It belongs to the MOZART1 family. Part of the gamma-tubulin complex.

The protein localises to the cytoplasm. Its subcellular location is the cytoskeleton. It is found in the microtubule organizing center. The protein resides in the spindle pole body. Required for gamma-tubulin complex recruitment to the microtubule organizing center (MTOC). This Coccidioides immitis (strain RS) (Valley fever fungus) protein is Mitotic-spindle organizing protein 1.